Here is a 251-residue protein sequence, read N- to C-terminus: Uridylate kinase (251 aa).

24–27 (KISG) provides a ligand contact to ATP. The segment at 32–37 (GDQGFG) is involved in allosteric activation by GTP. Glycine 66 is a UMP binding site. Glycine 67 and arginine 71 together coordinate ATP. UMP-binding positions include aspartate 86 and 147–154 (TGNPYFTT). Positions 175, 181, and 184 each coordinate ATP.

This sequence belongs to the UMP kinase family. Homohexamer.

The protein localises to the cytoplasm. The enzyme catalyses UMP + ATP = UDP + ADP. The protein operates within pyrimidine metabolism; CTP biosynthesis via de novo pathway; UDP from UMP (UMPK route): step 1/1. Allosterically activated by GTP. Inhibited by UTP. Its function is as follows. Catalyzes the reversible phosphorylation of UMP to UDP. This Ruegeria pomeroyi (strain ATCC 700808 / DSM 15171 / DSS-3) (Silicibacter pomeroyi) protein is Uridylate kinase.